The sequence spans 355 residues: DNA polymerase IV (355 aa).

In terms of domain architecture, UmuC spans 7–188; the sequence is IIHIDMDCFY…LPVRKLFGVG (182 aa). The Mg(2+) site is built by aspartate 11 and aspartate 106. Residue glutamate 107 is part of the active site.

It belongs to the DNA polymerase type-Y family. As to quaternary structure, monomer. The cofactor is Mg(2+).

The protein localises to the cytoplasm. It catalyses the reaction DNA(n) + a 2'-deoxyribonucleoside 5'-triphosphate = DNA(n+1) + diphosphate. Its function is as follows. Poorly processive, error-prone DNA polymerase involved in untargeted mutagenesis. Copies undamaged DNA at stalled replication forks, which arise in vivo from mismatched or misaligned primer ends. These misaligned primers can be extended by PolIV. Exhibits no 3'-5' exonuclease (proofreading) activity. May be involved in translesional synthesis, in conjunction with the beta clamp from PolIII. The chain is DNA polymerase IV from Legionella pneumophila (strain Corby).